Here is a 601-residue protein sequence, read N- to C-terminus: Invasin CotH3 (601 aa).

The signal sequence occupies residues 1–17 (MKLSIISAAFLVAITHA). Residues asparagine 28, asparagine 85, asparagine 170, asparagine 324, asparagine 449, asparagine 527, asparagine 541, asparagine 554, asparagine 561, and asparagine 571 are each glycosylated (N-linked (GlcNAc...) asparagine). Positions 539–579 (SANGTTAAAPAPAAGNSTGKGGNQSISSSASSNKTSAQSTS) are enriched in low complexity. Residues 539-581 (SANGTTAAAPAPAAGNSTGKGGNQSISSSASSNKTSAQSTSGA) form a disordered region. Serine 579 carries the GPI-anchor amidated serine lipid modification. Positions 580–601 (GASRSKTAPIVLAISALALLVF) are cleaved as a propeptide — removed in mature form.

As to quaternary structure, interacts with HSPA5/BiP on the cell surface of host nasal epithelial cells.

The protein localises to the cell membrane. Functionally, promotes invasion of host epithelial cells by adhering to receptors on the host cell surface to facilitate endocytosis of the pathogen into host cells. Binds HSPA5/BiP protein on the cell surface of host nasal epithelial cells. The polypeptide is Invasin CotH3 (Rhizopus delemar (strain RA 99-880 / ATCC MYA-4621 / FGSC 9543 / NRRL 43880) (Mucormycosis agent)).